Reading from the N-terminus, the 925-residue chain is Centrosomal protein of 104 kDa (925 aa).

Residues 209–289 (EVAQIIRKLD…RAEVYEQLEL (81 aa)) adopt a coiled-coil conformation. HEAT repeat units lie at residues 529-567 (TIPV…LQII) and 604-640 (GFTI…YRQH). A coiled-coil region spans residues 677 to 725 (DAEMRARRKAATEEAEKQKKEEIKALQGQLAALKEIQAEVQEKESDAVK). The segment at 883 to 925 (PALQPGKSSAVAASGPLGSKAGSKIPTPKGGLSKSSSRTYAKR) is disordered. Residues 915 to 925 (SKSSSRTYAKR) are compositionally biased toward polar residues.

In terms of assembly, interacts with CCP110 and CEP97. Interacts with ARMC9, TOGARAM1, CCDC66 and CSPP1.

Its subcellular location is the cell projection. It is found in the cilium. The protein localises to the cytoplasm. The protein resides in the cytoskeleton. It localises to the microtubule organizing center. Its subcellular location is the centrosome. It is found in the centriole. The protein localises to the spindle pole. In terms of biological role, required for ciliogenesis and for structural integrity at the ciliary tip. This chain is Centrosomal protein of 104 kDa (CEP104), found in Homo sapiens (Human).